The following is a 349-amino-acid chain: Fructose-1,6-bisphosphatase class 1 (349 aa).

Mg(2+)-binding residues include glutamate 91, aspartate 110, leucine 112, and aspartate 113. Residues 113-116 and asparagine 205 each bind substrate; that span reads DGSS. Glutamate 277 is a Mg(2+) binding site.

The protein belongs to the FBPase class 1 family. In terms of assembly, homotetramer. The cofactor is Mg(2+).

The protein localises to the cytoplasm. The enzyme catalyses beta-D-fructose 1,6-bisphosphate + H2O = beta-D-fructose 6-phosphate + phosphate. The protein operates within carbohydrate biosynthesis; gluconeogenesis. This Sinorhizobium medicae (strain WSM419) (Ensifer medicae) protein is Fructose-1,6-bisphosphatase class 1.